Here is a 278-residue protein sequence, read N- to C-terminus: Phosphatidylglycerol--prolipoprotein diacylglyceryl transferase (278 aa).

3 helical membrane passes run 13 to 33, 50 to 70, and 89 to 109; these read LFGI…ALAV, VFDF…LYYV, and NGGL…FFFT. Residue Arg-135 participates in a 1,2-diacyl-sn-glycero-3-phospho-(1'-sn-glycerol) binding. The next 3 helical transmembrane spans lie at 175–195, 205–225, and 236–256; these read QPTF…LVLL, GEVF…IEGL, and IRVS…IVIV.

This sequence belongs to the Lgt family.

It is found in the cell membrane. It catalyses the reaction L-cysteinyl-[prolipoprotein] + a 1,2-diacyl-sn-glycero-3-phospho-(1'-sn-glycerol) = an S-1,2-diacyl-sn-glyceryl-L-cysteinyl-[prolipoprotein] + sn-glycerol 1-phosphate + H(+). It participates in protein modification; lipoprotein biosynthesis (diacylglyceryl transfer). Its function is as follows. Catalyzes the transfer of the diacylglyceryl group from phosphatidylglycerol to the sulfhydryl group of the N-terminal cysteine of a prolipoprotein, the first step in the formation of mature lipoproteins. This Enterococcus faecalis (strain ATCC 700802 / V583) protein is Phosphatidylglycerol--prolipoprotein diacylglyceryl transferase.